Here is a 432-residue protein sequence, read N- to C-terminus: Gamma-glutamyl phosphate reductase (432 aa).

This sequence belongs to the gamma-glutamyl phosphate reductase family.

It is found in the cytoplasm. The enzyme catalyses L-glutamate 5-semialdehyde + phosphate + NADP(+) = L-glutamyl 5-phosphate + NADPH + H(+). The protein operates within amino-acid biosynthesis; L-proline biosynthesis; L-glutamate 5-semialdehyde from L-glutamate: step 2/2. In terms of biological role, catalyzes the NADPH-dependent reduction of L-glutamate 5-phosphate into L-glutamate 5-semialdehyde and phosphate. The product spontaneously undergoes cyclization to form 1-pyrroline-5-carboxylate. This Clavibacter michiganensis subsp. michiganensis (strain NCPPB 382) protein is Gamma-glutamyl phosphate reductase.